Here is a 667-residue protein sequence, read N- to C-terminus: MTQEKKAEDLERGTDATSAVPRLWSTHCDGEVLLRLSKHGPGHETPMTIPELFQESAERFSAYPALASKNGKKWDTLTFSQYYEMCRKAAKSLIKLGLQRFQCVGILGFNSVEWVVTALGTILAGGLCVGIYATNSAEACQYVIQQANVSILIVENDQQLQKILLIPPDKMETVKAIVQYKLPLMESMANLYSWNDFMELGNDIPNIQLDRVILSQKANQCAVILYTSGTTGTPKGVLLSHDNITWTAGAMSQEMEINRVSGKQNTIVSYLPLSHIAAQLTDIWIPIKIGALTFFAQPDALRGTLVYTLQEVKPTLFMGVPRIWEKMQDTIKENVARSSRLRKKAFAWAKMLGLKVNTKRMLGKRDIPMNYRMAKALVFAKVRTSLGLDNCHAFFSSASPLSQDVSEFFLSLDIPIGEIYGMSECSGPHTVSNKSVYRVLSCGKVLSGCKNMLYNQNKEGVGEVCMWGRHVFMGYLNKEEATLEALDENGWLHSGDIGRLDSHDFLYITGRIKEILITAGGENVSPIPIETLVKEKIPIISHAMLVGDKAKFLCMLLTLKCETDRKSGEPLNKLSVEAKSFCQMLGSQATTVSDILKSRDQVVYTAIQYGIDIVNQQAMSDSHRIRKWIILEKDFSIQGGELGPTSKLKRSVITQKYKAQIDSMYLS.

ATP-binding positions include 227–235 (TSGTTGTPK), 418–423 (EIYGMS), D496, R511, and R624.

The protein belongs to the ATP-dependent AMP-binding enzyme family. Bubblegum subfamily. Testis- and brainstem-specific. Expressed in pubertal and adult testis. Enriched in germ cells and Sertoli cells while present at a lower level in Leydig cells. Present in testicular Sertoli cells and large motoneurons in the medulla oblongata and cervical spinal cord (at protein level).

It localises to the cytoplasm. The protein localises to the membrane. It catalyses the reaction a long-chain fatty acid + ATP + CoA = a long-chain fatty acyl-CoA + AMP + diphosphate. It carries out the reaction (5Z,8Z,11Z,14Z)-eicosatetraenoate + ATP + CoA = (5Z,8Z,11Z,14Z)-eicosatetraenoyl-CoA + AMP + diphosphate. The enzyme catalyses hexadecanoate + ATP + CoA = hexadecanoyl-CoA + AMP + diphosphate. The catalysed reaction is (9Z)-octadecenoate + ATP + CoA = (9Z)-octadecenoyl-CoA + AMP + diphosphate. It catalyses the reaction (9Z,12Z)-octadecadienoate + ATP + CoA = (9Z,12Z)-octadecadienoyl-CoA + AMP + diphosphate. It carries out the reaction tetracosanoate + ATP + CoA = tetracosanoyl-CoA + AMP + diphosphate. Its function is as follows. Catalyzes the conversion of fatty acids such as long chain and very long-chain fatty acids to their active form acyl-CoAs for both synthesis of cellular lipids, and degradation via beta-oxidation. Can activate diverse saturated, monosaturated and polyunsaturated fatty acids. Has increased ability to activate oleic and linoleic acid. May play a role in spermatogenesis. This is Long-chain-fatty-acid--CoA ligase ACSBG2 from Mus musculus (Mouse).